Consider the following 277-residue polypeptide: MEMO1 family protein CTN_0605 (277 aa).

Belongs to the MEMO1 family.

The sequence is that of MEMO1 family protein CTN_0605 from Thermotoga neapolitana (strain ATCC 49049 / DSM 4359 / NBRC 107923 / NS-E).